Consider the following 307-residue polypeptide: Holliday junction branch migration complex subunit RuvB (307 aa).

The tract at residues 1-167 is large ATPase domain (RuvB-L); that stretch reads MKLQIKPPNN…FGMILNIDYY (167 aa). Residues Ile-5, Gly-48, Lys-51, Thr-52, Thr-53, 114-116, Arg-157, Tyr-167, and Arg-204 contribute to the ATP site; that span reads DDF. Thr-52 serves as a coordination point for Mg(2+). Positions 168–233 are small ATPAse domain (RuvB-S); it reads SNQEIERIVS…DLAALFKSLM (66 aa). Residues 236–307 are head domain (RuvB-H); that stretch reads KNGLQSIDVQ…RTGRNYLTSC (72 aa). Lys-289 and Arg-294 together coordinate DNA.

The protein belongs to the RuvB family. Homohexamer. Forms an RuvA(8)-RuvB(12)-Holliday junction (HJ) complex. HJ DNA is sandwiched between 2 RuvA tetramers; dsDNA enters through RuvA and exits via RuvB. An RuvB hexamer assembles on each DNA strand where it exits the tetramer. Each RuvB hexamer is contacted by two RuvA subunits (via domain III) on 2 adjacent RuvB subunits; this complex drives branch migration. In the full resolvosome a probable DNA-RuvA(4)-RuvB(12)-RuvC(2) complex forms which resolves the HJ.

Its subcellular location is the cytoplasm. It catalyses the reaction ATP + H2O = ADP + phosphate + H(+). Functionally, the RuvA-RuvB-RuvC complex processes Holliday junction (HJ) DNA during genetic recombination and DNA repair, while the RuvA-RuvB complex plays an important role in the rescue of blocked DNA replication forks via replication fork reversal (RFR). RuvA specifically binds to HJ cruciform DNA, conferring on it an open structure. The RuvB hexamer acts as an ATP-dependent pump, pulling dsDNA into and through the RuvAB complex. RuvB forms 2 homohexamers on either side of HJ DNA bound by 1 or 2 RuvA tetramers; 4 subunits per hexamer contact DNA at a time. Coordinated motions by a converter formed by DNA-disengaged RuvB subunits stimulates ATP hydrolysis and nucleotide exchange. Immobilization of the converter enables RuvB to convert the ATP-contained energy into a lever motion, pulling 2 nucleotides of DNA out of the RuvA tetramer per ATP hydrolyzed, thus driving DNA branch migration. The RuvB motors rotate together with the DNA substrate, which together with the progressing nucleotide cycle form the mechanistic basis for DNA recombination by continuous HJ branch migration. Branch migration allows RuvC to scan DNA until it finds its consensus sequence, where it cleaves and resolves cruciform DNA. The polypeptide is Holliday junction branch migration complex subunit RuvB (Mycoplasma pneumoniae (strain ATCC 29342 / M129 / Subtype 1) (Mycoplasmoides pneumoniae)).